Here is a 215-residue protein sequence, read N- to C-terminus: Thymidylate kinase (215 aa).

7–14 (GLDGSGKT) serves as a coordination point for ATP.

The protein belongs to the thymidylate kinase family.

The catalysed reaction is dTMP + ATP = dTDP + ADP. In terms of biological role, phosphorylation of dTMP to form dTDP in both de novo and salvage pathways of dTTP synthesis. The chain is Thymidylate kinase from Mycoplasmopsis agalactiae (strain NCTC 10123 / CIP 59.7 / PG2) (Mycoplasma agalactiae).